The sequence spans 196 residues: MEIISSKLFILLTLATSSLLTSNIFCADELVMSNLHSKENYDKYSEPRGYPKGERSLNFEELKDWGPKNVIKMSTPAVNKMPHSFANLPLRFGRNVQEERSAGATANLPLRSGRNMEVSLVRRVPNLPQRFGRTTTAKSVCRMLSDLCQGSMHSPCANDLFYSMTCQHQEIQNPDQKQSRRLLFKKIDDAELKQEK.

The signal sequence occupies residues 1–26 (MEIISSKLFILLTLATSSLLTSNIFC). Residues 27 to 55 (ADELVMSNLHSKENYDKYSEPRGYPKGER) constitute a propeptide that is removed on maturation. F92 carries the post-translational modification Phenylalanine amide. Propeptides lie at residues 95–99 (NVQEE) and 115–121 (NMEVSLV). Position 131 is a phenylalanine amide (F131). Positions 134-196 (TTTAKSVCRM…IDDAELKQEK (63 aa)) are excised as a propeptide.

Belongs to the FARP (FMRFamide related peptide) family. As to expression, specifically expressed in the retina. In terms of tissue distribution, detected in the hypothalamus.

It localises to the secreted. Efficiently inhibits forskolin-induced production of cAMP. Acts as a potent negative regulator of gonadotropin synthesis and secretion. Induces secretion of prolactin. Functionally, efficiently inhibits forskolin-induced production of cAMP. Blocks morphine-induced analgesia. In terms of biological role, shows no inhibitory activity of forskolin-induced production of cAMP. In Homo sapiens (Human), this protein is Pro-FMRFamide-related neuropeptide VF.